The primary structure comprises 272 residues: Shikimate dehydrogenase (NADP(+)) (272 aa).

Shikimate contacts are provided by residues 14–16 (SKS) and Thr61. Catalysis depends on Lys65, which acts as the Proton acceptor. Glu77 is a binding site for NADP(+). Shikimate-binding residues include Asn86 and Asp102. NADP(+)-binding positions include 126–130 (GAGGA), 149–154 (NRTVFR), and Met213. Residue Tyr215 coordinates shikimate. Gly237 is a binding site for NADP(+).

This sequence belongs to the shikimate dehydrogenase family. Homodimer.

The catalysed reaction is shikimate + NADP(+) = 3-dehydroshikimate + NADPH + H(+). The protein operates within metabolic intermediate biosynthesis; chorismate biosynthesis; chorismate from D-erythrose 4-phosphate and phosphoenolpyruvate: step 4/7. In terms of biological role, involved in the biosynthesis of the chorismate, which leads to the biosynthesis of aromatic amino acids. Catalyzes the reversible NADPH linked reduction of 3-dehydroshikimate (DHSA) to yield shikimate (SA). The chain is Shikimate dehydrogenase (NADP(+)) from Escherichia coli O127:H6 (strain E2348/69 / EPEC).